Here is a 312-residue protein sequence, read N- to C-terminus: Methionyl-tRNA formyltransferase (312 aa).

112 to 115 (SLLP) lines the (6S)-5,6,7,8-tetrahydrofolate pocket.

This sequence belongs to the Fmt family.

The catalysed reaction is L-methionyl-tRNA(fMet) + (6R)-10-formyltetrahydrofolate = N-formyl-L-methionyl-tRNA(fMet) + (6S)-5,6,7,8-tetrahydrofolate + H(+). Functionally, attaches a formyl group to the free amino group of methionyl-tRNA(fMet). The formyl group appears to play a dual role in the initiator identity of N-formylmethionyl-tRNA by promoting its recognition by IF2 and preventing the misappropriation of this tRNA by the elongation apparatus. The chain is Methionyl-tRNA formyltransferase from Magnetococcus marinus (strain ATCC BAA-1437 / JCM 17883 / MC-1).